The sequence spans 83 residues: U2-hexatoxin-Hi1a (83 aa).

The first 23 residues, 1-23, serve as a signal peptide directing secretion; it reads MRNTTFLVLNVMLLVSVALFCAA. A propeptide spanning residues 24 to 45 is cleaved from the precursor; that stretch reads DPEMEKSSFAEILDTGNPEQER. Intrachain disulfides connect cysteine 47–cysteine 63, cysteine 54–cysteine 68, cysteine 62–cysteine 78, and cysteine 70–cysteine 76.

This sequence belongs to the neurotoxin 07 (Beta/delta-agtx) family. Expressed by the venom gland.

It localises to the secreted. In terms of biological role, inhibits sodium channels (Nav) of insects. The protein is U2-hexatoxin-Hi1a of Hadronyche infensa (Fraser island funnel-web spider).